The chain runs to 494 residues: Tripartite motif-containing protein 5 (494 aa).

Alanine 2 is subject to N-acetylalanine. The RING-type zinc finger occupies 15-59 (CPICLELLTQPLSLDCGHSFCQACLTANHKTSMPDEGERSCPVCR). Position 86 is a phosphoserine (serine 86). The segment at 91–133 (QKVDHCARHGEKLLLFCREDRKVICWLCERSQEHRGHHTFLTE) adopts a B box-type zinc-finger fold. Residues cysteine 96, histidine 99, cysteine 118, and histidine 124 each coordinate Zn(2+). Residues 132-241 (TEEVAQEYQV…LISDLEHRLQ (110 aa)) adopt a coiled-coil conformation. A required for interaction with GABARAP and for autophagy region spans residues 186-199 (FEQLRHILDWVESN). A B30.2/SPRY domain is found at 282–494 (LKVMLKKLRE…VPMTLCSPSS (213 aa)).

This sequence belongs to the TRIM/RBCC family. Can form homodimers and homotrimers. In addition to lower-order dimerization, also exhibits a higher-order multimerization and both low- and high-order multimerizations are essential for its restriction activity. Interacts with BTBD1 and BTBD2. Interacts with PSMC4, PSMC5, PSMD7 and HSPA8/HSC70. Interacts (via B30.2/SPRY domain) with HSPA1A/B. Interacts with PSMC2, MAP3K7/TAK1, TAB2 and TAB3. Interacts with SQSTM1. Interacts with TRIM6 and TRIM34. Interacts with ULK1 (phosphorylated form), GABARAP, GABARAPL1, GABARAPL2, MAP1LC3A, MAP1LC3C and BECN1. In terms of processing, degraded in a proteasome-independent fashion in the absence of viral infection but in a proteasome-dependent fashion following exposure to restriction sensitive virus. Post-translationally, autoubiquitinated in a RING finger- and UBE2D2-dependent manner. Monoubiquitinated by TRIM21. Deubiquitinated by Yersinia YopJ. Ubiquitination may not lead to proteasomal degradation.

The protein localises to the cytoplasm. It is found in the nucleus. The enzyme catalyses S-ubiquitinyl-[E2 ubiquitin-conjugating enzyme]-L-cysteine + [acceptor protein]-L-lysine = [E2 ubiquitin-conjugating enzyme]-L-cysteine + N(6)-ubiquitinyl-[acceptor protein]-L-lysine.. It functions in the pathway protein modification; protein ubiquitination. Functionally, capsid-specific restriction factor that prevents infection from non-host-adapted retroviruses. Blocks viral replication early in the life cycle, after viral entry but before reverse transcription. In addition to acting as a capsid-specific restriction factor, also acts as a pattern recognition receptor that activates innate immune signaling in response to the retroviral capsid lattice. Binding to the viral capsid triggers its E3 ubiquitin ligase activity, and in concert with the heterodimeric ubiquitin conjugating enzyme complex UBE2V1-UBE2N (also known as UBC13-UEV1A complex) generates 'Lys-63'-linked polyubiquitin chains, which in turn are catalysts in the autophosphorylation of the MAP3K7/TAK1 complex (includes TAK1, TAB2, and TAB3). Activation of the MAP3K7/TAK1 complex by autophosphorylation results in the induction and expression of NF-kappa-B and MAPK-responsive inflammatory genes, thereby leading to an innate immune response in the infected cell. Plays a role in regulating autophagy through activation of autophagy regulator BECN1 by causing its dissociation from its inhibitors BCL2 and TAB2. In Nomascus leucogenys (Northern white-cheeked gibbon), this protein is Tripartite motif-containing protein 5 (TRIM5).